The sequence spans 356 residues: DNA polymerase IV (356 aa).

In terms of domain architecture, UmuC spans 7–188 (IIHIDMDAFY…IPVTKFYGVG (182 aa)). Mg(2+) is bound by residues aspartate 11 and aspartate 106. Glutamate 107 is an active-site residue.

Belongs to the DNA polymerase type-Y family. Monomer. It depends on Mg(2+) as a cofactor.

The protein resides in the cytoplasm. The enzyme catalyses DNA(n) + a 2'-deoxyribonucleoside 5'-triphosphate = DNA(n+1) + diphosphate. Functionally, poorly processive, error-prone DNA polymerase involved in untargeted mutagenesis. Copies undamaged DNA at stalled replication forks, which arise in vivo from mismatched or misaligned primer ends. These misaligned primers can be extended by PolIV. Exhibits no 3'-5' exonuclease (proofreading) activity. May be involved in translesional synthesis, in conjunction with the beta clamp from PolIII. The polypeptide is DNA polymerase IV (Listeria monocytogenes serotype 4b (strain CLIP80459)).